The sequence spans 305 residues: Foldase protein PrsA (305 aa).

A signal peptide spans 1–19; sequence MKKWFIALAGLLLTVTLAG. A lipid anchor (N-palmitoyl cysteine) is attached at Cys-20. A lipid anchor (S-diacylglycerol cysteine) is attached at Cys-20. Residues 136 to 235 enclose the PpiC domain; it reads EPEVSVAHIL…YGYHVILMLK (100 aa).

The protein belongs to the PrsA family.

The protein localises to the cell membrane. The enzyme catalyses [protein]-peptidylproline (omega=180) = [protein]-peptidylproline (omega=0). Functionally, plays a major role in protein secretion by helping the post-translocational extracellular folding of several secreted proteins. This chain is Foldase protein PrsA, found in Levilactobacillus brevis (strain ATCC 367 / BCRC 12310 / CIP 105137 / JCM 1170 / LMG 11437 / NCIMB 947 / NCTC 947) (Lactobacillus brevis).